The primary structure comprises 275 residues: 4,5-DOPA dioxygenase extradiol 1 (275 aa).

H22, H60, H182, and H236 together coordinate Zn(2+).

It belongs to the DODA-type extradiol aromatic ring-opening dioxygenase family. Requires Zn(2+) as cofactor.

It catalyses the reaction L-dopa + O2 = 4-(L-alanin-3-yl)-2-hydroxy-cis,cis-muconate 6-semialdehyde + H(+). Its pathway is pigment biosynthesis; betalain biosynthesis. Functionally, opens the cyclic ring of dihydroxy-phenylalanine (DOPA) between carbons 4 and 5, thus producing an unstable seco-DOPA that rearranges nonenzymatically to betalamic acid. In Beta vulgaris (Sugar beet), this protein is 4,5-DOPA dioxygenase extradiol 1.